The sequence spans 199 residues: Dephospho-CoA kinase (199 aa).

Positions 3–199 (VLGLTGSIGM…AAAKMPRRRD (197 aa)) constitute a DPCK domain. Position 11–16 (11–16 (GMGKST)) interacts with ATP.

The protein belongs to the CoaE family.

It is found in the cytoplasm. It carries out the reaction 3'-dephospho-CoA + ATP = ADP + CoA + H(+). It participates in cofactor biosynthesis; coenzyme A biosynthesis; CoA from (R)-pantothenate: step 5/5. Functionally, catalyzes the phosphorylation of the 3'-hydroxyl group of dephosphocoenzyme A to form coenzyme A. This chain is Dephospho-CoA kinase, found in Rhodopseudomonas palustris (strain ATCC BAA-98 / CGA009).